A 464-amino-acid polypeptide reads, in one-letter code: 3-isopropylmalate dehydratase large subunit (464 aa).

The [4Fe-4S] cluster site is built by Cys337, Cys397, and Cys400.

It belongs to the aconitase/IPM isomerase family. LeuC type 1 subfamily. As to quaternary structure, heterodimer of LeuC and LeuD. [4Fe-4S] cluster serves as cofactor.

The enzyme catalyses (2R,3S)-3-isopropylmalate = (2S)-2-isopropylmalate. The protein operates within amino-acid biosynthesis; L-leucine biosynthesis; L-leucine from 3-methyl-2-oxobutanoate: step 2/4. Catalyzes the isomerization between 2-isopropylmalate and 3-isopropylmalate, via the formation of 2-isopropylmaleate. In Bacillus cereus (strain AH187), this protein is 3-isopropylmalate dehydratase large subunit.